Consider the following 128-residue polypeptide: Large ribosomal subunit protein bL17 (128 aa).

Belongs to the bacterial ribosomal protein bL17 family. Part of the 50S ribosomal subunit. Contacts protein L32.

The sequence is that of Large ribosomal subunit protein bL17 from Streptococcus pyogenes serotype M49 (strain NZ131).